Here is a 90-residue protein sequence, read N- to C-terminus: Mucin-like protein 1 (90 aa).

Residues 1–20 (MKFLAVLVLLGVSIFLVSAQ) form the signal peptide. 14 O-linked (GalNAc...) threonine glycosylation sites follow: Thr23, Thr24, Thr30, Thr34, Thr46, Thr47, Thr51, Thr52, Thr54, Thr55, Thr59, Thr60, Thr62, and Thr63. Composition is skewed to low complexity over residues 25–36 (AAPADTYPATGP) and 44–68 (AETT…ASTT). The interval 25–68 (AAPADTYPATGPADDEAPDAETTAAATTATTAAPTTATTAASTT) is disordered. 3 consecutive repeat copies span residues 46–53 (TTAAATTA), 54–61 (TTAAPTTA), and 62–69 (TTAASTTA). The tract at residues 46 to 69 (TTAAATTATTAAPTTATTAASTTA) is 3 X 8 AA tandem repeat of T-T-A-A-[APS]-T-T-A. An O-linked (GalNAc...) serine glycan is attached at Ser66. O-linked (GalNAc...) threonine glycans are attached at residues Thr67 and Thr68.

O-glycosylated. In terms of tissue distribution, expressed in mammary, salivary glands and prostate. Also detected in lung. Mainly expressed in cancer cell lines of breast origin. Highly expressed in lymph node-positive compared with node-negative tumors. Detected in all lymph node containing metastatic cells.

Its subcellular location is the secreted. The protein resides in the membrane. Its function is as follows. May play a role as marker for the diagnosis of metastatic breast cancer. In Homo sapiens (Human), this protein is Mucin-like protein 1 (MUCL1).